Reading from the N-terminus, the 470-residue chain is Argininosuccinate synthase (470 aa).

ATP-binding positions include 17-25 (AFSGGLDTS) and Ala-43. L-citrulline is bound at residue Tyr-99. The ATP site is built by Gly-129 and Thr-131. 3 residues coordinate L-aspartate: Thr-131, Asn-135, and Asp-136. Asn-135 contributes to the L-citrulline binding site. Residue Asp-136 participates in ATP binding. L-citrulline-binding residues include Arg-139 and Ser-192. Position 194 (Asp-194) interacts with ATP. 3 residues coordinate L-citrulline: Thr-201, Glu-203, and Glu-280. The tract at residues 448-470 (IASRGESSGDELLDRAAMESGTD) is disordered.

The protein belongs to the argininosuccinate synthase family. Type 2 subfamily. Homotetramer.

It is found in the cytoplasm. The enzyme catalyses L-citrulline + L-aspartate + ATP = 2-(N(omega)-L-arginino)succinate + AMP + diphosphate + H(+). It participates in amino-acid biosynthesis; L-arginine biosynthesis; L-arginine from L-ornithine and carbamoyl phosphate: step 2/3. The chain is Argininosuccinate synthase from Kineococcus radiotolerans (strain ATCC BAA-149 / DSM 14245 / SRS30216).